Here is a 309-residue protein sequence, read N- to C-terminus: Dihydroorotate dehydrogenase B (NAD(+)), catalytic subunit (309 aa).

FMN-binding positions include Ser-21 and 45–46 (KA). Substrate is bound by residues Lys-45 and 69–73 (NAIGL). 2 residues coordinate FMN: Asn-99 and Asn-127. Asn-127 contributes to the substrate binding site. Cys-130 serves as the catalytic Nucleophile. Residues Lys-165 and Ile-191 each contribute to the FMN site. A substrate-binding site is contributed by 192-193 (NT). FMN-binding positions include Gly-217, 243–244 (GG), and 265–266 (GT).

This sequence belongs to the dihydroorotate dehydrogenase family. Type 1 subfamily. As to quaternary structure, heterotetramer of 2 PyrK and 2 PyrD type B subunits. Requires FMN as cofactor.

It localises to the cytoplasm. The catalysed reaction is (S)-dihydroorotate + NAD(+) = orotate + NADH + H(+). It functions in the pathway pyrimidine metabolism; UMP biosynthesis via de novo pathway; orotate from (S)-dihydroorotate (NAD(+) route): step 1/1. Its function is as follows. Catalyzes the conversion of dihydroorotate to orotate with NAD(+) as electron acceptor. The sequence is that of Dihydroorotate dehydrogenase B (NAD(+)), catalytic subunit (pyrD) from Exiguobacterium sibiricum (strain DSM 17290 / CCUG 55495 / CIP 109462 / JCM 13490 / 255-15).